Consider the following 322-residue polypeptide: MNPLTKVKLINELNEREVQLGVADKVSWHSEYKDSAWIFLGGLPYELTEGDIICVFSQYGEIVNINLVRDKKTGKSKGFCFLCYEDQRSTILAVDNFNGIKIKGRTIRVDHVSNYRAPKDSEEIDDVTRQLQEKGCGARTPSPSLSESSEDEKPTKKHKKDKKEKKKKKKEKEKADREVQAEQPSSSSPRRKTVKEKDDTGPKKHSSKNSERAQKSEPREGQKLPKSRTAYSGGAEDLERELKKEKPKHEHKSSSRREAREEKTRIRDRGRSSDAHSSWYNGRSEGRSYRSRSRSRDKSHRHKRARRSRERESSNPSDRWRH.

Residue Lys8 forms a Glycyl lysine isopeptide (Lys-Gly) (interchain with G-Cter in SUMO2) linkage. In terms of domain architecture, RRM spans 36–114; that stretch reads AWIFLGGLPY…RTIRVDHVSN (79 aa). The tract at residues 134 to 322 is disordered; that stretch reads KGCGARTPSP…SSNPSDRWRH (189 aa). The residue at position 140 (Thr140) is a Phosphothreonine. Ser149 bears the Phosphoserine mark. Over residues 155–171 the composition is skewed to basic residues; that stretch reads TKKHKKDKKEKKKKKKE. A phosphoserine mark is found at Ser186 and Ser188. The segment covering 195-223 has biased composition (basic and acidic residues); sequence KEKDDTGPKKHSSKNSERAQKSEPREGQK. Ser232 carries the post-translational modification Phosphoserine. The segment covering 240-274 has biased composition (basic and acidic residues); sequence RELKKEKPKHEHKSSSRREAREEKTRIRDRGRSSD. Residue Lys243 forms a Glycyl lysine isopeptide (Lys-Gly) (interchain with G-Cter in SUMO2) linkage. Ser272 is subject to Phosphoserine. Over residues 289-308 the composition is skewed to basic residues; it reads YRSRSRSRDKSHRHKRARRS. Ser314 carries the post-translational modification Phosphoserine.

It belongs to the IST3 family. Part of the activated spliceosome B/catalytic step 1 spliceosome, one of the forms of the spliceosome which has a well-formed active site but still cannot catalyze the branching reaction and is composed of at least 52 proteins, the U2, U5 and U6 snRNAs and the pre-mRNA. Component of the minor spliceosome, which splices U12-type introns.

The protein resides in the nucleus. Its function is as follows. Involved in pre-mRNA splicing as component of the activated spliceosome. As a component of the minor spliceosome, involved in the splicing of U12-type introns in pre-mRNAs. The chain is RNA-binding motif protein, X-linked 2 (RBMX2) from Homo sapiens (Human).